The sequence spans 385 residues: tRNA-specific 2-thiouridylase MnmA (385 aa).

Residues 27-34 (AMSGGVDS) and L53 each bind ATP. C121 serves as the catalytic Nucleophile. C121 and C217 form a disulfide bridge. Position 145 (G145) interacts with ATP. The segment at 167-169 (KDQ) is interaction with tRNA. C217 functions as the Cysteine persulfide intermediate in the catalytic mechanism.

It belongs to the MnmA/TRMU family.

Its subcellular location is the cytoplasm. The enzyme catalyses S-sulfanyl-L-cysteinyl-[protein] + uridine(34) in tRNA + AH2 + ATP = 2-thiouridine(34) in tRNA + L-cysteinyl-[protein] + A + AMP + diphosphate + H(+). Functionally, catalyzes the 2-thiolation of uridine at the wobble position (U34) of tRNA, leading to the formation of s(2)U34. This chain is tRNA-specific 2-thiouridylase MnmA, found in Sorangium cellulosum (strain So ce56) (Polyangium cellulosum (strain So ce56)).